The primary structure comprises 220 residues: MEADPCRREREEMVEFQIRARGIGDERVLAAMRKIPRHLFVPKNLERVAYEDRPLPIGEGQTISQPYIVAVMTEHLEIRSHDRVLEIGTGSGYQAALLAELAAKVVSVERLPDIADRARENLARAGVTGIEVVVGDGTQGYPPEAPYDAIVVTAASPEIPQPLIDQLGKGGRLVAPVGPRECQDLVKLVKREGRVETIPLGGVCFVPLIGQFGWQGEVSP.

Residue serine 64 is part of the active site.

Belongs to the methyltransferase superfamily. L-isoaspartyl/D-aspartyl protein methyltransferase family.

It is found in the cytoplasm. It carries out the reaction [protein]-L-isoaspartate + S-adenosyl-L-methionine = [protein]-L-isoaspartate alpha-methyl ester + S-adenosyl-L-homocysteine. Catalyzes the methyl esterification of L-isoaspartyl residues in peptides and proteins that result from spontaneous decomposition of normal L-aspartyl and L-asparaginyl residues. It plays a role in the repair and/or degradation of damaged proteins. The protein is Protein-L-isoaspartate O-methyltransferase of Methanoculleus marisnigri (strain ATCC 35101 / DSM 1498 / JR1).